The sequence spans 152 residues: Cell division protein SepF (152 aa).

The segment covering 23–32 (EVAREPEPMQ) has biased composition (basic and acidic residues). Residues 23-42 (EVAREPEPMQKKTKKEKPSK) form a disordered region.

The protein belongs to the SepF family. In terms of assembly, homodimer. Interacts with FtsZ.

The protein localises to the cytoplasm. Functionally, cell division protein that is part of the divisome complex and is recruited early to the Z-ring. Probably stimulates Z-ring formation, perhaps through the cross-linking of FtsZ protofilaments. Its function overlaps with FtsA. The protein is Cell division protein SepF of Listeria welshimeri serovar 6b (strain ATCC 35897 / DSM 20650 / CCUG 15529 / CIP 8149 / NCTC 11857 / SLCC 5334 / V8).